The following is a 372-amino-acid chain: Glycerol-3-phosphate dehydrogenase [NAD(+)] (372 aa).

Positions 1 to 16 (MAPSELNCTHQNQHSS) are enriched in polar residues. The tract at residues 1 to 23 (MAPSELNCTHQNQHSSGYDGPRS) is disordered. NAD(+)-binding positions include 29 to 34 (GSGNWG), phenylalanine 60, phenylalanine 117, lysine 140, and alanine 173. Residue lysine 140 participates in substrate binding. Catalysis depends on lysine 225, which acts as the Proton acceptor. NAD(+) is bound by residues arginine 289, lysine 318, and glutamine 320. Residue 289–290 (RN) participates in substrate binding.

This sequence belongs to the NAD-dependent glycerol-3-phosphate dehydrogenase family.

It carries out the reaction sn-glycerol 3-phosphate + NAD(+) = dihydroxyacetone phosphate + NADH + H(+). The sequence is that of Glycerol-3-phosphate dehydrogenase [NAD(+)] (GPDH) from Cuphea lanceolata (Cigar flower).